We begin with the raw amino-acid sequence, 488 residues long: Glutamyl-tRNA(Gln) amidotransferase subunit B, mitochondrial (488 aa).

The protein belongs to the GatB/GatE family. GatB subfamily. Subunit of the heterotrimeric GatFAB amidotransferase (AdT) complex, composed of A, B and F subunits.

Its subcellular location is the mitochondrion. It catalyses the reaction L-glutamyl-tRNA(Gln) + L-glutamine + ATP + H2O = L-glutaminyl-tRNA(Gln) + L-glutamate + ADP + phosphate + H(+). Functionally, allows the formation of correctly charged Gln-tRNA(Gln) through the transamidation of misacylated Glu-tRNA(Gln) in the mitochondria. The reaction takes place in the presence of glutamine and ATP through an activated gamma-phospho-Glu-tRNA(Gln). The chain is Glutamyl-tRNA(Gln) amidotransferase subunit B, mitochondrial from Candida albicans (strain SC5314 / ATCC MYA-2876) (Yeast).